The following is a 426-amino-acid chain: Synaptotagmin-13 (426 aa).

The Vesicular segment spans residues Met-1–Pro-6. Residues Val-7 to Leu-29 traverse the membrane as a helical segment. Topologically, residues Cys-30–Leu-426 are cytoplasmic. C2 domains are found at residues Gln-158–Gly-275 and Gly-287–His-422.

It belongs to the synaptotagmin family. As to quaternary structure, interacts with NRXN1. Expressed in brain, heart, spleen, lung and testis.

The protein resides in the cytoplasmic vesicle membrane. Its function is as follows. May be involved in transport vesicle docking to the plasma membrane. The polypeptide is Synaptotagmin-13 (Syt13) (Mus musculus (Mouse)).